The chain runs to 843 residues: Aconitase AMT8-2 (843 aa).

Position 258–260 (258–260 (DSH)) interacts with substrate. 3 residues coordinate [4Fe-4S] cluster: Cys450, Cys513, and Cys516. Residues Arg536, Arg541, and 712 to 713 (SR) each bind substrate.

Belongs to the aconitase/IPM isomerase family.

It participates in mycotoxin biosynthesis. Aconitase; part of the gene clusters that mediate the biosynthesis of AM-toxins, host-selective toxins (HSTs) causing Alternaria blotch on apple, a worldwide distributed disease. AM-toxins are cyclic depsipeptides containing the 3 residues 2-hydroxy-isovaleric acid (2-HIV), dehydroalanine, L-alanine which are common for all 3 AM-toxins I to III. The fourth precursor is L-alpha-amino-methoxyphenyl-valeric acid (L-Amv) for AM-toxin I, L-alpha-amino-phenyl-valeric acid (L-Apv) for AM-toxin II, and L-alpha-amino-hydroxyphenyl-valeric acid (L-Ahv) for AM-toxin III. AM-toxins have two target sites for affecting susceptible apple cells; they cause invagination of the plasma membrane and electrolyte loss and chloroplast disorganization. The non-ribosomal peptide synthetase AMT1 contains 4 catalytic modules and is responsible for activation of each residue in AM-toxin. The aldo-keto reductase AMT2 catalyzes the conversion of 2-keto-isovaleric acid (2-KIV) to 2-hydroxy-isovaleric acid (2-HIV), one of the precursor residues incorporated by AMT1 during AM-toxin biosynthesis, by reduction of its ketone to an alcohol. The cytochrome P450 monooxygenase AMT3 and the thioesterase AMT4 are also important for AM-toxin production, but their exact function within the AM-toxin biosynthesis are not known yet. Up to 21 proteins (including AMT1 to AMT4) are predicted to be involved in AM-toxin biosynthesis since their expression ishighly up-regulated in AM-toxin-producing cultures. In Alternaria alternata (Alternaria rot fungus), this protein is Aconitase AMT8-2.